Reading from the N-terminus, the 485-residue chain is 28S rRNA (uridine-N(3))-methyltransferase (485 aa).

Positions 296, 318, and 347 each coordinate S-adenosyl-L-methionine.

This sequence belongs to the class IV-like SAM-binding methyltransferase superfamily.

It localises to the nucleus. It carries out the reaction uridine in 28S rRNA + S-adenosyl-L-methionine = N(3)-methyluridine in 28S rRNA + S-adenosyl-L-homocysteine + H(+). In terms of biological role, S-adenosyl-L-methionine-dependent methyltransferase that specifically methylates the uridine in position 3485 of 28S rRNA. In Drosophila melanogaster (Fruit fly), this protein is 28S rRNA (uridine-N(3))-methyltransferase.